Reading from the N-terminus, the 322-residue chain is Lymphokine-activated killer T-cell-originated protein kinase (322 aa).

M1 carries the N-acetylmethionine modification. 2 positions are modified to phosphothreonine: T9 and T24. A Phosphoserine modification is found at S32. The Protein kinase domain occupies 32-322; the sequence is SPFMQKLGFG…HIVEALETDV (291 aa). 38–46 provides a ligand contact to ATP; it reads LGFGTGVNV. S59 bears the Phosphoserine mark. Position 64 (K64) interacts with ATP. The active-site Proton acceptor is the D167. Residue K169 forms a Glycyl lysine isopeptide (Lys-Gly) (interchain with G-Cter in SUMO2) linkage. Positions 320–322 are PDZ-interaction; sequence TDV.

It belongs to the protein kinase superfamily. STE Ser/Thr protein kinase family. MAP kinase kinase subfamily. In terms of assembly, interacts with DLG1 and TP53. Phosphorylated; in a cell-cycle dependent manner at mitosis. As to expression, expressed in the testis and placenta. In the testis, restrictedly expressed in outer cell layer of seminiferous tubules.

It catalyses the reaction L-seryl-[protein] + ATP = O-phospho-L-seryl-[protein] + ADP + H(+). It carries out the reaction L-threonyl-[protein] + ATP = O-phospho-L-threonyl-[protein] + ADP + H(+). The catalysed reaction is L-tyrosyl-[protein] + ATP = O-phospho-L-tyrosyl-[protein] + ADP + H(+). With respect to regulation, activated by phosphorylation. Phosphorylates MAP kinase p38. Seems to be active only in mitosis. May also play a role in the activation of lymphoid cells. When phosphorylated, forms a complex with TP53, leading to TP53 destabilization and attenuation of G2/M checkpoint during doxorubicin-induced DNA damage. This is Lymphokine-activated killer T-cell-originated protein kinase (PBK) from Homo sapiens (Human).